The sequence spans 310 residues: Malate dehydrogenase (310 aa).

NAD(+) is bound by residues 7–12 and Asp32; that span reads GAGNVG. Residues Arg81 and Arg87 each contribute to the substrate site. Residues Asn94 and 117 to 119 each bind NAD(+); that span reads VSN. Substrate contacts are provided by Asn119 and Arg150. The active-site Proton acceptor is His174.

It belongs to the LDH/MDH superfamily. MDH type 3 family.

It catalyses the reaction (S)-malate + NAD(+) = oxaloacetate + NADH + H(+). Its function is as follows. Catalyzes the reversible oxidation of malate to oxaloacetate. The chain is Malate dehydrogenase from Chlorobium luteolum (strain DSM 273 / BCRC 81028 / 2530) (Pelodictyon luteolum).